The primary structure comprises 359 residues: Protein RecA (359 aa).

64-71 (GHESSGKT) is a binding site for ATP. Residues 329–359 (KYSNKDSNDSPKEGSKIKTKVNPAVTQDELI) form a disordered region. A compositionally biased stretch (basic and acidic residues) spans 331 to 344 (SNKDSNDSPKEGSK).

It belongs to the RecA family.

It localises to the cytoplasm. Can catalyze the hydrolysis of ATP in the presence of single-stranded DNA, the ATP-dependent uptake of single-stranded DNA by duplex DNA, and the ATP-dependent hybridization of homologous single-stranded DNAs. It interacts with LexA causing its activation and leading to its autocatalytic cleavage. This is Protein RecA from Francisella tularensis subsp. tularensis (strain FSC 198).